Here is a 154-residue protein sequence, read N- to C-terminus: Myoglobin (154 aa).

The 147-residue stretch at 2–148 (GLSDGEWQLV…FRKDMASNYK (147 aa)) folds into the Globin domain. The residue at position 4 (S4) is a Phosphoserine. H65 provides a ligand contact to nitrite. O2 is bound at residue H65. Residue T68 is modified to Phosphothreonine. H94 is a binding site for heme b.

Belongs to the globin family. As to quaternary structure, monomeric.

The protein resides in the cytoplasm. The protein localises to the sarcoplasm. The catalysed reaction is Fe(III)-heme b-[protein] + nitric oxide + H2O = Fe(II)-heme b-[protein] + nitrite + 2 H(+). It catalyses the reaction H2O2 + AH2 = A + 2 H2O. Its function is as follows. Monomeric heme protein which primary function is to store oxygen and facilitate its diffusion within muscle tissues. Reversibly binds oxygen through a pentacoordinated heme iron and enables its timely and efficient release as needed during periods of heightened demand. Depending on the oxidative conditions of tissues and cells, and in addition to its ability to bind oxygen, it also has a nitrite reductase activity whereby it regulates the production of bioactive nitric oxide. Under stress conditions, like hypoxia and anoxia, it also protects cells against reactive oxygen species thanks to its pseudoperoxidase activity. In Homo sapiens (Human), this protein is Myoglobin.